Here is a 338-residue protein sequence, read N- to C-terminus: Tryptophan--tRNA ligase (338 aa).

Residues 12–14 and 20–21 contribute to the ATP site; these read QPT and GN. A 'HIGH' region motif is present at residues 13 to 21; it reads PTGDLHIGN. Aspartate 136 is a binding site for L-tryptophan. ATP-binding positions include 148 to 150, isoleucine 191, and 200 to 204; these read GED and KMSKS. Residues 200 to 204 carry the 'KMSKS' region motif; sequence KMSKS.

This sequence belongs to the class-I aminoacyl-tRNA synthetase family. In terms of assembly, homodimer.

The protein localises to the cytoplasm. The catalysed reaction is tRNA(Trp) + L-tryptophan + ATP = L-tryptophyl-tRNA(Trp) + AMP + diphosphate + H(+). In terms of biological role, catalyzes the attachment of tryptophan to tRNA(Trp). This chain is Tryptophan--tRNA ligase, found in Prochlorococcus marinus subsp. pastoris (strain CCMP1986 / NIES-2087 / MED4).